Here is a 466-residue protein sequence, read N- to C-terminus: Argininosuccinate lyase (466 aa).

This sequence belongs to the lyase 1 family. Argininosuccinate lyase subfamily.

It is found in the cytoplasm. It carries out the reaction 2-(N(omega)-L-arginino)succinate = fumarate + L-arginine. Its pathway is amino-acid biosynthesis; L-arginine biosynthesis; L-arginine from L-ornithine and carbamoyl phosphate: step 3/3. This Bartonella bacilliformis (strain ATCC 35685 / KC583 / Herrer 020/F12,63) protein is Argininosuccinate lyase.